Consider the following 223-residue polypeptide: MAGEGLGQQGASATAAPETREHLFKVLVIGELGVGKTSIIKRYVHQLFSQHYRATIGVDFALKVLNWDSRTLVRLQLWDIAGQERFGNMTRVYYKEALGAFVVFDISRSSTFDAVLKWKNDLDSKVHLPNGSPIPAVLLANKCDQKKDNSQSPSQMDQFCKDHGFTGWFETSAKDNINIDEATRFLVENMLANQQSFPSEEIDLDRIKLVEEPPTTKPRSQCC.

Position 2 is an N-acetylalanine (Ala2). GTP is bound by residues Val34, Gly35, Lys36, Thr37, Ser38, Ser49, Gln50, Tyr52, and Thr55. Thr37 lines the Mg(2+) pocket. The Switch 1 motif lies at 46-60; it reads QLFSQHYRATIGVDF. Thr55 is a Mg(2+) binding site. Ser69 is modified (phosphoserine). Residue Asp79 participates in Mg(2+) binding. Residues Gly82, Asn141, Lys142, Asp144, Ala173, and Lys174 each contribute to the GTP site. The Switch 2 signature appears at 82–95; it reads GQERFGNMTRVYYK. The PKA-RII subunit binding domain stretch occupies residues 176 to 195; it reads NINIDEATRFLVENMLANQQ. Residues Cys222 and Cys223 are each lipidated (S-geranylgeranyl cysteine).

It belongs to the small GTPase superfamily. Rab family. Interacts with ANKRD27. A decreased interaction with ANKRD27 seen in the presence of SGSM2. Interacts with LRRK2 (via N-terminus); this interaction results in stimulation of RAB10 phosphorylation by LRRK2. Mg(2+) is required as a cofactor. Widely expressed with highest levels in liver. Strong expression also found in melanocyte, platelet, mast cell and fibroblast cell lines.

Its subcellular location is the mitochondrion. It localises to the mitochondrion outer membrane. It is found in the cytoplasmic vesicle. The protein resides in the phagosome. The protein localises to the phagosome membrane. Its subcellular location is the melanosome. It localises to the melanosome membrane. It catalyses the reaction GTP + H2O = GDP + phosphate + H(+). Regulated by guanine the nucleotide exchange factor (GEF) BLOC-3 complex composed of HPS1 and HPS4 which promote the exchange of bound GDP for free GTP. Regulated by the GTPase activating protein (GAP) SGSM2/RUTBC1 which increases the GTP hydrolysis activity. Inhibited by GDP dissociation inhibitors (GDIs) which prevent Rab-GDP dissociation. In terms of biological role, the small GTPases Rab are key regulators of intracellular membrane trafficking, from the formation of transport vesicles to their fusion with membranes. Rabs cycle between an inactive GDP-bound form and an active GTP-bound form that is able to recruit to membranes different set of downstream effectors directly responsible for vesicle formation, movement, tethering and fusion. Also acts as an A-kinase anchoring protein by binding to the type II regulatory subunit of protein kinase A and anchoring it to the mitochondrion. Also involved in synchronization of mitochondrial fission. Plays a role in the maturation of phagosomes that engulf pathogens, such as S.aureus and M.tuberculosis. Plays an important role in the control of melanin production and melanosome biogenesis. In concert with RAB38, regulates the proper trafficking of melanogenic enzymes TYR, TYRP1 and DCT/TYRP2 to melanosomes in melanocytes. Stimulates phosphorylation of RAB10 'Thr-73' by LRRK2. The protein is Ras-related protein Rab-32 of Mus musculus (Mouse).